Consider the following 748-residue polypeptide: Acyl-coenzyme A oxidase (748 aa).

The protein belongs to the acyl-CoA oxidase family. As to quaternary structure, homooctamer. The cofactor is FAD.

Its subcellular location is the peroxisome. It catalyses the reaction a 2,3-saturated acyl-CoA + O2 = a (2E)-enoyl-CoA + H2O2. The protein operates within lipid metabolism; peroxisomal fatty acid beta-oxidation. This chain is Acyl-coenzyme A oxidase (POX1), found in Saccharomyces cerevisiae (strain ATCC 204508 / S288c) (Baker's yeast).